A 162-amino-acid chain; its full sequence is Transcription elongation factor GreA (162 aa).

The stretch at 45–74 forms a coiled coil; the sequence is ENAEYEAAREKQAFIEGRIKELEDMTARAE.

It belongs to the GreA/GreB family.

In terms of biological role, necessary for efficient RNA polymerase transcription elongation past template-encoded arresting sites. The arresting sites in DNA have the property of trapping a certain fraction of elongating RNA polymerases that pass through, resulting in locked ternary complexes. Cleavage of the nascent transcript by cleavage factors such as GreA or GreB allows the resumption of elongation from the new 3'terminus. GreA releases sequences of 2 to 3 nucleotides. This is Transcription elongation factor GreA from Rickettsia conorii (strain ATCC VR-613 / Malish 7).